A 928-amino-acid polypeptide reads, in one-letter code: Putative replication origin binding protein (928 aa).

In terms of domain architecture, Helicase ATP-binding spans 386–516; that stretch reads NIVPPKGHIT…QVLRDILMTA (131 aa). 399-406 contributes to the ATP binding site; the sequence is ASLGTGKT. A DEAD box motif is present at residues 484–487; sequence DECD.

Belongs to the herpesviridae oribp family.

Its function is as follows. Displays bipolar ssDNA and dsDNA unwinding activities that require the same core catalytic residues for unwinding in either direction, the 3'-5' direction being more robust. The protein is Putative replication origin binding protein of Escherichia coli (Enterobacteria phage T5).